A 240-amino-acid polypeptide reads, in one-letter code: Myomodulin neuropeptides 2 (240 aa).

Residues 1–23 (MWKILETCSCFLVVAVLSGLGKA) form the signal peptide. Residues 23-44 (AQPESFSGSAVTDDSTSGANKR) form a disordered region. Residues 24-44 (QPESFSGSAVTDDSTSGANKR) constitute a propeptide that is removed on maturation. Polar residues predominate over residues 26–41 (ESFSGSAVTDDSTSGA). Leucine amide is present on residues L51 and L60. 2 consecutive propeptides (connecting peptide) follow at residues 72-81 (SGHQVPMLRA) and 84-112 (GSPD…RDQS). A81 is modified (alanine amide). At Q115 the chain carries Pyrrolidone carboxylic acid. Y121 is subject to Tyrosine amide. Propeptides (connecting peptide) lie at residues 124–147 (DNNG…SNFD), 124–148 (DNNG…NFDL), 124–149 (DNNG…FDLL), 124–168 (DNNG…GGRY), 131–168 (DLLD…GGRY), 149–168 (LSSL…GGRY), 150–168 (SSLN…GGRY), 151–168 (SLNN…GGRY), 171–190 (SLPD…LVQS), and 171–199 (SLPD…PYSS). An Isoleucine amide modification is found at I207. Positions 210-219 (FSGSPRLQAK) are excised as a propeptide. The interval 212–240 (GSPRLQAKAVPRPRIGRQESQMREAKSAE) is disordered. Isoleucine amide is present on I226. A propeptide spanning residues 227 to 240 (GRQESQMREAKSAE) is cleaved from the precursor. Residues 227 to 240 (GRQESQMREAKSAE) show a composition bias toward basic and acidic residues.

In terms of tissue distribution, expressed in the pedal-buccal projection neurons in the pedal ganglion.

It localises to the secreted. In terms of biological role, MMG2-DPs (Myomodulin gene 2-derived peptides) bias egestive feeding programs toward ingestive ones, and modulate accessory radula closer (ARC) muscle contractions. The sequence is that of Myomodulin neuropeptides 2 (MMG2) from Aplysia californica (California sea hare).